The following is a 262-amino-acid chain: MWNLAGKELSSRLLLGTACYPSLEHMQQAILNSGTEVITISIKRQTSAGLDGESFWQAVKKLDCHFLPNTAGCRNAEAAINTAEIARELFDTHWIKLEVIGDDYNLQPEPFELIKATRILIDRGFEVFPYCTDDLVLCQKLVDAGCKILMPWGAPIGSGKGLINPYALETLRYRFPDITLIIDAGIGKPSHAVQAMEFGFDGVLLNTAVALANHPALMATAFRHAVIAGHQAFTGGMMSERNVAHPSTPLIDTPFWHQVNNL.

Catalysis depends on Lys-96, which acts as the Schiff-base intermediate with DXP. 1-deoxy-D-xylulose 5-phosphate is bound by residues Gly-157, 184–185, and 206–207; these read AG and NT.

Belongs to the ThiG family. As to quaternary structure, homotetramer. Forms heterodimers with either ThiH or ThiS.

The protein resides in the cytoplasm. It carries out the reaction [ThiS sulfur-carrier protein]-C-terminal-Gly-aminoethanethioate + 2-iminoacetate + 1-deoxy-D-xylulose 5-phosphate = [ThiS sulfur-carrier protein]-C-terminal Gly-Gly + 2-[(2R,5Z)-2-carboxy-4-methylthiazol-5(2H)-ylidene]ethyl phosphate + 2 H2O + H(+). It functions in the pathway cofactor biosynthesis; thiamine diphosphate biosynthesis. Catalyzes the rearrangement of 1-deoxy-D-xylulose 5-phosphate (DXP) to produce the thiazole phosphate moiety of thiamine. Sulfur is provided by the thiocarboxylate moiety of the carrier protein ThiS. In vitro, sulfur can be provided by H(2)S. The polypeptide is Thiazole synthase (Legionella pneumophila (strain Paris)).